The following is a 575-amino-acid chain: Phosphoenolpyruvate-protein phosphotransferase (575 aa).

Residue histidine 189 is the Tele-phosphohistidine intermediate of the active site. 2 residues coordinate phosphoenolpyruvate: arginine 296 and arginine 332. Mg(2+) is bound by residues glutamate 431 and aspartate 455. Phosphoenolpyruvate contacts are provided by residues 454 to 455 (ND) and arginine 465. The Proton donor role is filled by cysteine 502.

The protein belongs to the PEP-utilizing enzyme family. In terms of assembly, homodimer. The cofactor is Mg(2+).

The protein localises to the cytoplasm. The catalysed reaction is L-histidyl-[protein] + phosphoenolpyruvate = N(pros)-phospho-L-histidyl-[protein] + pyruvate. General (non sugar-specific) component of the phosphoenolpyruvate-dependent sugar phosphotransferase system (sugar PTS). This major carbohydrate active-transport system catalyzes the phosphorylation of incoming sugar substrates concomitantly with their translocation across the cell membrane. Enzyme I transfers the phosphoryl group from phosphoenolpyruvate (PEP) to the phosphoryl carrier protein (HPr). The sequence is that of Phosphoenolpyruvate-protein phosphotransferase (ptsI) from Haemophilus influenzae (strain ATCC 51907 / DSM 11121 / KW20 / Rd).